The primary structure comprises 57 residues: Small hydrophobic protein (57 aa).

Over 1–8 the chain is Virion surface; that stretch reads MPANQPPL. A helical membrane pass occupies residues 9–29; the sequence is YLTFLLLILLYLIITLYVWTI. Over 30–57 the chain is Intravirion; that stretch reads LTINHKTAVRYAALYQRSCSRWGFDQSL.

The protein belongs to the rubulavirus small hydrophobic protein family. Interacts with host TNFRSF1A, RIPK1 and IRAK1; these interactions interfere with host NF-kappa-B activation at the level of receptor complexes. Interacts with host protein UBQLN4.

It is found in the virion membrane. The protein localises to the host cell membrane. Plays a role in the inhibition of the host NF-kappa-B pathway. This inhibition occurs at the receptor level, by preventing the signaling of TNFR1 as well as IL-1R and TLR3. This Homo sapiens (Human) protein is Small hydrophobic protein (SH).